The following is a 156-amino-acid chain: Small ribosomal subunit protein uS7 (156 aa).

Belongs to the universal ribosomal protein uS7 family. As to quaternary structure, part of the 30S ribosomal subunit. Contacts proteins S9 and S11.

Functionally, one of the primary rRNA binding proteins, it binds directly to 16S rRNA where it nucleates assembly of the head domain of the 30S subunit. Is located at the subunit interface close to the decoding center, probably blocks exit of the E-site tRNA. This chain is Small ribosomal subunit protein uS7, found in Microcystis aeruginosa (strain NIES-843 / IAM M-2473).